We begin with the raw amino-acid sequence, 208 residues long: Uracil phosphoribosyltransferase (208 aa).

Residues Arg78, Arg103, and 130 to 138 (DPMLATANS) contribute to the 5-phospho-alpha-D-ribose 1-diphosphate site. Residues Ile193 and 198-200 (GDA) contribute to the uracil site. Asp199 is a binding site for 5-phospho-alpha-D-ribose 1-diphosphate.

It belongs to the UPRTase family. Mg(2+) serves as cofactor.

It catalyses the reaction UMP + diphosphate = 5-phospho-alpha-D-ribose 1-diphosphate + uracil. It functions in the pathway pyrimidine metabolism; UMP biosynthesis via salvage pathway; UMP from uracil: step 1/1. With respect to regulation, allosterically activated by GTP. Catalyzes the conversion of uracil and 5-phospho-alpha-D-ribose 1-diphosphate (PRPP) to UMP and diphosphate. In Brucella melitensis biotype 2 (strain ATCC 23457), this protein is Uracil phosphoribosyltransferase.